Reading from the N-terminus, the 594-residue chain is Dictomallein-4 (594 aa).

Residues 1–18 form the signal peptide; the sequence is MKLVLIFLIINFLLIINC. One can recognise a Peptidase M66 domain in the interval 147–408; sequence PDVSQDYTLK…QNYFKNSIYY (262 aa). Residue histidine 300 participates in Zn(2+) binding. Residue glutamate 301 is part of the active site. Zn(2+) is bound by residues histidine 304 and histidine 310.

The protein belongs to the dictomallein family. Requires Zn(2+) as cofactor.

Its subcellular location is the secreted. This Dictyostelium discoideum (Social amoeba) protein is Dictomallein-4 (dtmlD).